A 181-amino-acid chain; its full sequence is Protoporphyrinogen IX dehydrogenase [quinone] (181 aa).

One can recognise a Flavodoxin-like domain in the interval Thr-3–Ala-172. FMN contacts are provided by residues Thr-9–Gln-13 and Phe-84–Thr-152.

This sequence belongs to the HemG family. Requires FMN as cofactor.

The protein resides in the cell inner membrane. It carries out the reaction protoporphyrinogen IX + 3 a menaquinone = protoporphyrin IX + 3 a menaquinol. The catalysed reaction is protoporphyrinogen IX + 3 a ubiquinone = protoporphyrin IX + 3 a ubiquinol. It catalyses the reaction protoporphyrinogen IX + 3 a quinone = protoporphyrin IX + 3 a quinol. It participates in porphyrin-containing compound metabolism; protoporphyrin-IX biosynthesis; protoporphyrin-IX from protoporphyrinogen-IX: step 1/1. In terms of biological role, catalyzes the 6-electron oxidation of protoporphyrinogen IX to form protoporphyrin IX; under anaerobic conditions uses menaquinone as an electron acceptor, under aerobic condition uses ubiquinone as an electron acceptor. In Escherichia coli O157:H7, this protein is Protoporphyrinogen IX dehydrogenase [quinone].